The sequence spans 419 residues: Ubiquitin receptor RAD23c (419 aa).

In terms of domain architecture, Ubiquitin-like spans 1-79 (MKIFVKTLKG…IVIMMNKSKP (79 aa)). Residues 83–118 (AASSASAGTSQAKSIPPSTSQPSISPQTPASVSAPV) show a composition bias toward low complexity. Residues 83-172 (AASSASAGTS…DSAPVGSQGD (90 aa)) form a disordered region. The segment covering 119–135 (APAPTRPPPPAPTPTPA) has biased composition (pro residues). Positions 136–146 (PVAATETVTTP) are enriched in low complexity. Residues 185-228 (SNLESTIQQILDMGGGTWDRETVVLALRAAFNNPERAVEYLYTG) enclose the UBA 1 domain. The tract at residues 235 to 282 (VPPVARPPASAGQPANPPAQTQQPAAAPASGPNANPLDLFPQGLPNVG) is disordered. A compositionally biased stretch (low complexity) spans 245–270 (AGQPANPPAQTQQPAAAPASGPNANP). One can recognise an STI1 domain in the interval 288 to 331 (GTLDFLRNSQQFQALRAMVQANPQVLQPMLQELGKQNPNLMRLI). Positions 372–413 (THEEREAIERLEAMGFERALVLEVFFACNKNEELAANYLLDH) constitute a UBA 2 domain.

It belongs to the RAD23 family. Interacts with 'Lys-48'-linked polyubiquitin chains via its both UBA domains. Interacts with RPN10 via its ubiquitin-like domain. Widely expressed in the whole plant.

The protein resides in the nucleus. It localises to the cytoplasm. Functionally, may be involved in nucleotide excision repair. Binds and presumably selects ubiquitin-conjugates for destruction. Prefers multiubiquitin chains rather than single ubiquitins, with a binding affinity for 'Lys-48'-linked ubiquitin chains. Acts as a ubiquitin receptor that associates with the 26S proteasomal docking subunit RPN10 for the indirect recognition of ubiquitinated substrates of ubiquitin/26S proteasome-mediated proteolysis (UPP). Involved in UV tolerance in hypocotyls, specifically in dark conditions. The chain is Ubiquitin receptor RAD23c from Arabidopsis thaliana (Mouse-ear cress).